A 96-amino-acid polypeptide reads, in one-letter code: UPF0235 protein YggU (96 aa).

The protein belongs to the UPF0235 family.

The chain is UPF0235 protein YggU from Escherichia coli O127:H6 (strain E2348/69 / EPEC).